A 316-amino-acid polypeptide reads, in one-letter code: Ribosomal protein L11 methyltransferase (316 aa).

Positions 162, 183, 205, and 248 each coordinate S-adenosyl-L-methionine.

This sequence belongs to the methyltransferase superfamily. PrmA family.

The protein localises to the cytoplasm. The catalysed reaction is L-lysyl-[protein] + 3 S-adenosyl-L-methionine = N(6),N(6),N(6)-trimethyl-L-lysyl-[protein] + 3 S-adenosyl-L-homocysteine + 3 H(+). Its function is as follows. Methylates ribosomal protein L11. In Levilactobacillus brevis (strain ATCC 367 / BCRC 12310 / CIP 105137 / JCM 1170 / LMG 11437 / NCIMB 947 / NCTC 947) (Lactobacillus brevis), this protein is Ribosomal protein L11 methyltransferase.